The chain runs to 240 residues: Ribosomal RNA small subunit methyltransferase G (240 aa).

S-adenosyl-L-methionine is bound by residues Gly-80, Phe-85, 103–105 (DSS), 131–132 (AE), and Arg-150.

It belongs to the methyltransferase superfamily. RNA methyltransferase RsmG family.

The protein resides in the cytoplasm. Its function is as follows. Specifically methylates the N7 position of a guanine in 16S rRNA. The sequence is that of Ribosomal RNA small subunit methyltransferase G from Thermoanaerobacter sp. (strain X514).